A 328-amino-acid chain; its full sequence is MEIVWEVLFLLQANFIVCISAQQNSPKIHEGWWAYKEVVQGSFVPVPSFWGLVNSAWNLCSVGKRQSPVNIETSHMIFDPFLTPLRINTGGRKVSGTMYNTGRHVSLRLDKEHLVNISGGPMTYSHRLEEIRLHFGSEDSQGSEHLLNGQAFSGEVQLIHYNHELYTNVTEAAKSPNGLVVVSIFIKVSDSSNPFLNRMLNRDTITRITYKNDAYLLQGLNIEELYPETSSFITYDGSMTIPPCYETASWIIMNKPVYITRMQMHSLRLLSQNQPSQIFLSMSDNFRPVQPLNNRCIRTNINFSLQGKDCPNNRAQKLQYRVNEWLLK.

One can recognise an Alpha-carbonic anhydrase domain in the interval glycine 31 to isoleucine 301.

The protein belongs to the alpha-carbonic anhydrase family.

Does not have a catalytic activity. The polypeptide is Carbonic anhydrase-related protein 10 (CA10) (Macaca fascicularis (Crab-eating macaque)).